Consider the following 249-residue polypeptide: Probable transcriptional regulatory protein OTBS_0251 (249 aa).

Belongs to the TACO1 family.

Its subcellular location is the cytoplasm. In Orientia tsutsugamushi (strain Boryong) (Rickettsia tsutsugamushi), this protein is Probable transcriptional regulatory protein OTBS_0251.